The following is a 1163-amino-acid chain: MLSAVLLLLFFIQNVQNFDKIELEDITVYFPLKVDYLAPFGCATGTKCDDEGAAYIPSAMEIAINRLNADKDLEVFHDLDVNYVDTSKTAGPRAARTAALNNGTIAALGLMRDCYIQSTILNINSKIAVSDVCEMDLSSVKGFDQTSVLMNSQTNSLAKSVMYFLDKYQWKKVALVSPSTVLTAFATRVRSDLLDALTANKIDILVDSRLDPMSDITDKVKEDAEKARIFIICDWSSNANLLRNYLFKLGEMNKMQSGEYFVLGYISYDTNYQWLEASSGDQRLVHLGASDINDYNLTENDLHEVYKNVVILSDGPPPAEPNSTWEDIKSQVLMKKPAKMCPPYCNTTVSEKITPRWDRIKLLFDSIQYLADATNDALNIGANIYQSDIFYEYLISRKIDSVTGVTEFIDGYGAIVGSIQIYYHFSSSSHNSYSLFPCARLAQSSLLNTVWSLTDYSEGLSIDFVNKSAPKDTPVCGFYGENCGPPANNTFIIVISVGVAVLIGLAIAAAFLYKRYRYERRLHSLFFMIDRNQIILKKHTNLMSQQSLRSMASIHGSVVAASQTLRDSHFFIEDYNNASSINASSIFNTGSTARAGPFGPIPGFGGVTGASEDEKWHQIPDFGVGLYEGRTVALKRIYRSDVEFTRSIRLEIAKLQESVNSNVIEFVGMVVQSPDVFVVYELAQRGSLKDILDNDDMPLDDVFRSQMTKDIIAGLEYLHSSPIGCHGRLKSTNCLIDARWMVRLSSFGLRELRGEETWQQEDDVQEGKDQLWTSPELLRWSTGLSQCGVLLVQKSDVYSLAIVLYELFGRLGPWGDEPMEPREIVSLVKREALAGKKPFRPDMAVLKESPRIVQETVVAAWTEDPLNRPSLHQIKRKLKPLTIGLKRTIMDNMVSMIEKYTDKLEKDIAERNEELEGEKAKSEALLKMMLPEVVADSLKLGSNVSAESFENCTVFFSDCPGFVEMSATSKPIDIVQFLNDLYTVFDRIIDQFDVYKVETIADAYMVASGLPVPNGNHHAGEIASLGLALLKAVESFKIRHLPNEKVRLRIGMNSGPCVAGVVGLKMPRYCLFGDTVNTASRMESNGIPLRINCSGTAKEILDQLGGYEIEERGIVEMKGKGKQMTYFVRGENSDMRRERIIRERVKFASLKKAQIQEKTYEFS.

A signal peptide spans 1–17; it reads MLSAVLLLLFFIQNVQN. The Extracellular segment spans residues 18 to 490; sequence FDKIELEDIT…ENCGPPANNT (473 aa). Residues Asn-102, Asn-296, Asn-322, Asn-346, Asn-466, and Asn-488 are each glycosylated (N-linked (GlcNAc...) asparagine). The helical transmembrane segment at 491 to 511 threads the bilayer; it reads FIIVISVGVAVLIGLAIAAAF. The Cytoplasmic segment spans residues 512–1163; sequence LYKRYRYERR…QIQEKTYEFS (652 aa). One can recognise a Protein kinase domain in the interval 587 to 882; sequence FNTGSTARAG…QIKRKLKPLT (296 aa). Residues 593–601 and Lys-635 each bind ATP; that span reads ARAGPFGPI. The stretch at 901–930 forms a coiled coil; sequence TDKLEKDIAERNEELEGEKAKSEALLKMML. Residues 953-1083 form the Guanylate cyclase domain; the sequence is TVFFSDCPGF…DTVNTASRME (131 aa).

It belongs to the adenylyl cyclase class-4/guanylyl cyclase family. In terms of tissue distribution, expressed in ASG sensory neurons.

It localises to the cell membrane. The catalysed reaction is GTP = 3',5'-cyclic GMP + diphosphate. Its function is as follows. Guanylate cyclase involved in the production of the second messenger cGMP. Plays a role in dauer formation. This Caenorhabditis elegans protein is Receptor-type guanylate cyclase gcy-21.